Here is a 309-residue protein sequence, read N- to C-terminus: Neuropeptide-like 1 (309 aa).

Residues Met1–Pro28 form the signal peptide. Positions Arg29–Asp99 are excised as a propeptide. Residues Gly126–Glu147 form a disordered region. Residues Pro133–Glu144 show a composition bias toward acidic residues. Tyr164 is modified (tyrosine amide). At Asn182 the chain carries Asparagine amide.

In terms of tissue distribution, MTYamide peptide: Expressed in the larval CNS (at protein level). NAP peptide: Expressed in the larval CNS (at protein level). IPNamide peptide: Expressed in the ventral ganglion of the third larval instar and adult brain (at protein level).

The protein resides in the secreted. Functionally, acts as a ligand for the receptor-type guanylate cyclase Gyc76C. Stimulates Gyc76c-dependent cGMP production and modulates the IMD innate immune pathway in response to salt stress by inducing nuclear translocation of NF-kappa-B protein Rel which leads to increased expression of the antimicrobial peptide diptericin. Does not appear to play a role in Gyc76C-mediated wing development. This Drosophila melanogaster (Fruit fly) protein is Neuropeptide-like 1 (Nplp1).